A 271-amino-acid chain; its full sequence is GATA transcription factor 19 (271 aa).

The tract at residues 1-23 (MAAEPPADGRDPPADDGAAGDGA) is disordered. The region spanning 33–68 (LSAASEQLTLVYQGEVYVFDPVPPQKVQAVLLVLGG) is the Tify domain. Positions 95-137 (RIASLMRFREKRKERCFDKKIRYSVRKEVAQKMKRRKGQFAGR) constitute a CCT domain. The segment at 166-193 (CQNCGISSRLTPAMRRGPAGPRSLCNAC) adopts a GATA-type zinc-finger fold. Residues 238 to 271 (NQTTMKTDTEMVPEQEQKADVLPPTKEEDSMATS) are disordered. Positions 252-271 (QEQKADVLPPTKEEDSMATS) are enriched in basic and acidic residues.

The protein belongs to the type IV zinc-finger family. Class C subfamily.

It localises to the nucleus. Functionally, transcriptional activator that specifically binds 5'-GATA-3' or 5'-GAT-3' motifs within gene promoters. The chain is GATA transcription factor 19 from Oryza sativa subsp. indica (Rice).